A 1136-amino-acid polypeptide reads, in one-letter code: Mitochondrial 3' processome subunit 3 (1136 aa).

A mitochondrion-targeting transit peptide spans 1-97; it reads MKKAWAQLER…RGLVCTTVGD (97 aa).

Component of the mitochondrial 3' processome (MPsome) complex composed at least of terminal uridylyltransferase KRET1/TUT1, 3'-5' exonuclease DSS1, MPSS1, MPSS2 and MPSS3. Within the complex, interacts with KRET1.

It is found in the mitochondrion. In terms of biological role, as part of the mitochondrial 3' processome (MPsome), involved in the maturation of guided RNA (gRNA) precursors. The protein is Mitochondrial 3' processome subunit 3 of Trypanosoma brucei brucei.